A 592-amino-acid polypeptide reads, in one-letter code: Aspartate--tRNA(Asp/Asn) ligase (592 aa).

Glutamate 175 provides a ligand contact to L-aspartate. An aspartate region spans residues 199 to 202 (QLFK). Arginine 221 lines the L-aspartate pocket. ATP is bound by residues 221–223 (RDE) and glutamine 230. L-aspartate is bound at residue histidine 447. Glutamate 481 lines the ATP pocket. Arginine 488 serves as a coordination point for L-aspartate. An ATP-binding site is contributed by 533–536 (GIDR).

The protein belongs to the class-II aminoacyl-tRNA synthetase family. Type 1 subfamily. In terms of assembly, homodimer.

The protein resides in the cytoplasm. It carries out the reaction tRNA(Asx) + L-aspartate + ATP = L-aspartyl-tRNA(Asx) + AMP + diphosphate. Functionally, aspartyl-tRNA synthetase with relaxed tRNA specificity since it is able to aspartylate not only its cognate tRNA(Asp) but also tRNA(Asn). Reaction proceeds in two steps: L-aspartate is first activated by ATP to form Asp-AMP and then transferred to the acceptor end of tRNA(Asp/Asn). The chain is Aspartate--tRNA(Asp/Asn) ligase from Dictyoglomus turgidum (strain DSM 6724 / Z-1310).